The sequence spans 444 residues: Exodeoxyribonuclease 7 large subunit (444 aa).

Belongs to the XseA family. As to quaternary structure, heterooligomer composed of large and small subunits.

Its subcellular location is the cytoplasm. It catalyses the reaction Exonucleolytic cleavage in either 5'- to 3'- or 3'- to 5'-direction to yield nucleoside 5'-phosphates.. Functionally, bidirectionally degrades single-stranded DNA into large acid-insoluble oligonucleotides, which are then degraded further into small acid-soluble oligonucleotides. The chain is Exodeoxyribonuclease 7 large subunit from Xylella fastidiosa (strain 9a5c).